Reading from the N-terminus, the 304-residue chain is tRNA-uridine aminocarboxypropyltransferase 1 (304 aa).

At Ser-2 the chain carries N-acetylserine. The short motif at 206–209 (DSTW) is the DXTW element.

Belongs to the TDD superfamily. DTWD1 family.

It localises to the nucleus. It carries out the reaction a uridine in tRNA + S-adenosyl-L-methionine = a 3-[(3S)-3-amino-3-carboxypropyl]uridine in tRNA + S-methyl-5'-thioadenosine + H(+). In terms of biological role, catalyzes the formation of 3-(3-amino-3-carboxypropyl)uridine (acp3U) at position 20 in the D-loop of several cytoplasmic tRNAs (acp3U(20)). This chain is tRNA-uridine aminocarboxypropyltransferase 1, found in Homo sapiens (Human).